The chain runs to 798 residues: Probable G-protein coupled receptor 156 (798 aa).

At 1 to 49 (MEPEINCSEFCDSFPGQELDRRPLHDLCKTTITESQHSSTAASPLSPAL) the chain is on the extracellular side. N-linked (GlcNAc...) asparagine glycosylation occurs at N6. A helical transmembrane segment spans residues 50–70 (LGIMWTFLSCGLLLVLFFLAF). The Cytoplasmic segment spans residues 71–86 (TIRCRKNRIVKMSSPN). The chain crosses the membrane as a helical span at residues 87-107 (LNVVTLLGSCLTYISAYLFGI). The Extracellular segment spans residues 108–118 (QDALEGSSVEA). Residues 119–139 (LIQTRLSLLCIGTSLVFGPIL) traverse the membrane as a helical segment. The Cytoplasmic segment spans residues 140-164 (GKSWRLYKVFTQRVPDKRVIIKDLQ). The chain crosses the membrane as a helical span at residues 165–185 (LLGLVAALVVADVILLVTWVL). Topologically, residues 186–222 (TDPIQCLQMLGVSMKVTGRDVSCSLTNTHFCASRYSD) are extracellular. Residues 223-243 (VWIALVLGCKGLLLLYGAYLA) form a helical membrane-spanning segment. Residues 244–257 (GLTNHVSSPPVNQS) are Cytoplasmic-facing. The chain crosses the membrane as a helical span at residues 258–278 (LTIMVGVNLLLLTAGLLFVVT). Over 279–288 (RYLHSWPNLV) the chain is Extracellular. Residues 289-309 (FGLTSGGIFVCTTTVNCCVFI) traverse the membrane as a helical segment. Residues 310–798 (PQLKQWKAFE…FKDDLKPTLV (489 aa)) lie on the Cytoplasmic side of the membrane. The stretch at 353-390 (DEKSCMERLLTEKNAVIESLQEQVSNAKEKLVKLMSAE) forms a coiled coil. 3 disordered regions span residues 441–497 (HVQG…PMAP), 546–666 (SEAP…KQCE), and 693–715 (PAAPCLPSSPALPRQRQPRPRLS). A compositionally biased stretch (basic and acidic residues) spans 479–492 (PKAEQSEGPERGDQ). Over residues 559–572 (LWKSTTSRSPQKLS) the composition is skewed to polar residues. Residues 583 to 594 (VRRRRAAQRARS) are compositionally biased toward basic residues. The segment covering 606 to 624 (HQANSTVSSSQSGLIVQNR) has biased composition (polar residues). Low complexity predominate over residues 639–648 (PRSSSVKPSP).

It belongs to the G-protein coupled receptor 3 family. GABA-B receptor subfamily. As to expression, expressed in the outer and inner hair cells of the organ of Corti (at protein level). Expressed in the utricle and saccule within the vestibule (at protein level).

It localises to the cell membrane. The protein localises to the postsynaptic cell membrane. In terms of biological role, orphan G-protein coupled receptor involved in the regulation of hair cell orientation in mechanosensory organs of the inner ear. It is required to trigger a 180 degree reversal in hair cell orientation, creating a virtual line of polarity reversal (LPR) across which stereociliary bundles are arranged in opposite orientations. The chain is Probable G-protein coupled receptor 156 (Gpr156) from Mus musculus (Mouse).